A 1327-amino-acid chain; its full sequence is Myb-like protein O (1327 aa).

Residues 131–142 (NNNINTTNNNNK) are compositionally biased toward low complexity. 4 disordered regions span residues 131-153 (NNNI…EESN), 263-390 (EEED…DESS), 504-668 (PPQQ…NHES), and 717-770 (KKKK…DNDD). Residues 263–283 (EEEDDEDYIPPEEEEDDDEDN) show a composition bias toward acidic residues. Positions 322–353 (YNNTANNINNNNIGDESDNNNNNNNNINNNSN) are enriched in low complexity. The span at 356-374 (DDDDDDDDDNNDDDDDDND) shows a compositional bias: acidic residues. The span at 511–532 (SSSSINSSNTMSSSSSSSSLSK) shows a compositional bias: low complexity. Positions 533–542 (NKLKKKKKEE) are enriched in basic residues. The segment covering 543 to 554 (KRKEEKRKEEKR) has biased composition (basic and acidic residues). Basic residues predominate over residues 555-577 (KEKKRKKRQSITISKFKKNKKKT). The segment covering 585-606 (SESDSSSDDSDDSDFYYSDIEE) has biased composition (acidic residues). Residues 607–619 (GGGGNGNGSGSGV) are compositionally biased toward gly residues. Acidic residues predominate over residues 624 to 633 (SDNEEGDSSS). Composition is skewed to low complexity over residues 646 to 668 (HTNN…NHES) and 722 to 732 (QSSSSSSSSTI). Acidic residues predominate over residues 754 to 770 (NDDEDDNNNNNEDDNDD). The HTH myb-type domain occupies 897–953 (NVKLNQLKFTGGEDLLLLMGVKRFGTFNWRIIQKRYFPNKTDDQLFHRYKNLLSHSS). A DNA-binding region (H-T-H motif) is located at residues 925-949 (WRIIQKRYFPNKTDDQLFHRYKNLL). A Myb-like 1 domain is found at 959–1010 (KQYLNGAKFTKEEEEKLDGAIKIHGLKWDIISRDYLHWKEPAMLKKFYEKRE). 2 stretches are compositionally biased toward low complexity: residues 1061-1118 (NSTN…NENN) and 1144-1160 (PIIE…ETSP). 2 disordered regions span residues 1061-1122 (NSTN…YEFG) and 1144-1168 (PIIE…PCPI). In terms of domain architecture, Myb-like 2 spans 1268-1316 (KWTREEDRIILITVKEKGTVDNEIWKSLSDTKIQDKTPDQIMYRYLQLL).

Its subcellular location is the nucleus. This is Myb-like protein O (mybO) from Dictyostelium discoideum (Social amoeba).